Here is a 588-residue protein sequence, read N- to C-terminus: Aspartate--tRNA ligase (588 aa).

An L-aspartate-binding site is contributed by Glu-174. Positions 198 to 201 (QLFK) are aspartate. Arg-220 lines the L-aspartate pocket. Residues 220–222 (RDE) and Gln-229 contribute to the ATP site. His-448 contributes to the L-aspartate binding site. Glu-482 serves as a coordination point for ATP. An L-aspartate-binding site is contributed by Arg-489. Position 534 to 537 (534 to 537 (GIDR)) interacts with ATP.

The protein belongs to the class-II aminoacyl-tRNA synthetase family. Type 1 subfamily. In terms of assembly, homodimer.

Its subcellular location is the cytoplasm. It catalyses the reaction tRNA(Asp) + L-aspartate + ATP = L-aspartyl-tRNA(Asp) + AMP + diphosphate. In terms of biological role, catalyzes the attachment of L-aspartate to tRNA(Asp) in a two-step reaction: L-aspartate is first activated by ATP to form Asp-AMP and then transferred to the acceptor end of tRNA(Asp). The protein is Aspartate--tRNA ligase of Xanthomonas campestris pv. campestris (strain 8004).